The primary structure comprises 555 residues: MPSWIRAVILPLSGLLLTLPAAADVKARSCSEVRQAYGAKGFSLADIPYQEIAGEHLRICPQEYTCCTTEMEDKLSQQSKLEFENLVEETSHFVRTTFVSRHKKFDEFFRELLENAEKSLNDMFVRTYGMLYMQNSEVFQDLFTELKRYYTGGNVNLEEMLNDFWARLLERMFQLINPQYHFSEDYLECVSKYTDQLKPFGDVPRKLKIQVTRAFIAARTFVQGLTVGREVANRVSKVSPTPGCIRALMKMLYCPYCRGLPTVRPCNNYCLNVMKGCLANQADLDTEWNLFIDAMLLVAERLEGPFNIESVMDPIDVKISEAIMNMQENSMQVSAKVFQGCGQPKPAPALRSARSAPENFNTRFRPYNPEERPTTAAGTSLDRLVTDIKEKLKLSKKVWSALPYTICKDERVTAGTSNEEECWNGHSKARYLPEIMNDGLTNQINNPEVEVDITRPDTFIRQQIMALRVMTNKLKNAYNGNDVNFQDTSDESSGSGSGSGCMDDVCPTEFEFVTTEAPAVDPDRREEESSASKFSSSLISWSLVCMVLALQRLYR.

Positions 1-23 (MPSWIRAVILPLSGLLLTLPAAA) are cleaved as a signal peptide. Residues 348–357 (PALRSARSAP) are compositionally biased toward low complexity. Disordered regions lie at residues 348–376 (PALR…PTTA) and 480–501 (GNDV…GSGC). A lipid anchor (GPI-anchor amidated serine) is attached at serine 530. A propeptide spans 531 to 555 (ASKFSSSLISWSLVCMVLALQRLYR) (removed in mature form).

This sequence belongs to the glypican family. In the cartilage growth-plate, gradient of expression with highest levels from the proliferative and pre-hypertrophic zones to lowest, if any, in the hypertrophic zones (at protein level).

The protein resides in the cell membrane. Its subcellular location is the secreted. The protein localises to the extracellular space. Functionally, cell surface proteoglycan that bears heparan sulfate. Putative cell surface coreceptor for growth factors, extracellular matrix proteins, proteases and anti-proteases. Enhances migration and invasion of cancer cells through WNT5A signaling. This is Glypican-6 (Gpc6) from Mus musculus (Mouse).